The chain runs to 334 residues: Nucleoid-associated protein plu2870 (334 aa).

Belongs to the YejK family.

It is found in the cytoplasm. The protein localises to the nucleoid. The protein is Nucleoid-associated protein plu2870 of Photorhabdus laumondii subsp. laumondii (strain DSM 15139 / CIP 105565 / TT01) (Photorhabdus luminescens subsp. laumondii).